Reading from the N-terminus, the 365-residue chain is Isopentenyl-diphosphate delta-isomerase (365 aa).

8-9 (RK) contacts substrate. Residues 67–69 (SIT), Ser-97, and Asn-126 each bind FMN. Residue 97 to 99 (SQR) coordinates substrate. Gln-160 is a binding site for substrate. Glu-161 serves as a coordination point for Mg(2+). FMN is bound by residues Lys-192, Thr-222, 272 to 274 (GVR), and 293 to 294 (AL).

This sequence belongs to the IPP isomerase type 2 family. As to quaternary structure, homooctamer. Dimer of tetramers. Requires FMN as cofactor. It depends on NADPH as a cofactor. Mg(2+) serves as cofactor.

The protein resides in the cytoplasm. The enzyme catalyses isopentenyl diphosphate = dimethylallyl diphosphate. In terms of biological role, involved in the biosynthesis of isoprenoids. Catalyzes the 1,3-allylic rearrangement of the homoallylic substrate isopentenyl (IPP) to its allylic isomer, dimethylallyl diphosphate (DMAPP). The polypeptide is Isopentenyl-diphosphate delta-isomerase (Methanosarcina acetivorans (strain ATCC 35395 / DSM 2834 / JCM 12185 / C2A)).